We begin with the raw amino-acid sequence, 462 residues long: Lysophospholipid acyltransferase 1 (462 aa).

Transmembrane regions (helical) follow at residues 9–29 (SIGV…TIPV), 52–72 (FLSY…PMTI), 84–104 (CGII…VFYM), 158–178 (SLIE…GPVY), 211–231 (AILQ…QYPL), 263–283 (YFIW…FSGW), 353–373 (AVWH…ALMI), 396–416 (IMVF…AVGF), and 431–451 (VYYI…VVPA). His-356 is an active-site residue.

The protein belongs to the membrane-bound acyltransferase family. Expressed in roots, rosette leaves, petals, stigma, chalazal endosperm of developing seeds and vascular bundles of siliques.

It localises to the endoplasmic reticulum membrane. The enzyme catalyses a 1-acyl-sn-glycero-3-phosphocholine + an acyl-CoA = a 1,2-diacyl-sn-glycero-3-phosphocholine + CoA. It carries out the reaction 1-(9Z-octadecenoyl)-sn-glycero-3-phosphocholine + (9Z)-octadecenoyl-CoA = 1,2-di-(9Z-octadecenoyl)-sn-glycero-3-phosphocholine + CoA. The catalysed reaction is 1-(9Z-octadecenoyl)-sn-glycero-3-phosphocholine + (9Z,12Z)-octadecadienoyl-CoA = 1-(9Z)-octadecenoyl-2-(9Z,12Z)-octadecadienoyl-sn-glycero-3-phosphocholine + CoA. It catalyses the reaction (9Z,12Z,15Z)-octadecatrienoyl-CoA + 1-(9Z-octadecenoyl)-sn-glycero-3-phosphocholine = 1-(9Z-octadecaenoyl)-2-(9Z,12Z,15Z-octadecatrienoyl)-sn-glycero-3-phosphocholine + CoA. The enzyme catalyses a 1-acyl-sn-glycero-3-phosphoethanolamine + an acyl-CoA = a 1,2-diacyl-sn-glycero-3-phosphoethanolamine + CoA. It carries out the reaction a 1-acyl-sn-glycero-3-phospho-L-serine + an acyl-CoA = a 1,2-diacyl-sn-glycero-3-phospho-L-serine + CoA. Lysophospholipid acyltransferase with broad specificity. Mediates the conversion of lysophosphatidylethanolamine (1-acyl-sn-glycero-3-phosphoethanolamine or LPE) into phosphatidylethanolamine (1,2-diacyl-sn-glycero-3-phosphoethanolamine or PE) (LPEAT activity). Catalyzes the acylation of lysophosphatidylserine (1-acyl-2-hydroxy-sn-glycero-3-phospho-L-serine or LPS) into phosphatidylserine (1,2-diacyl-sn-glycero-3-phospho-L-serine or PS) (LPSAT activity). Can convert lysophosphatidylcholine (1-acyl-sn-glycero-3-phosphocholine or LPC) into phosphatidylcholine (1,2-diacyl-sn-glycero-3-phosphocholine or PC) (LPCAT activity). Exhibits preference for C18-unsaturated acyl-CoA when transferring an acyl group to lysophosphatidylcholine. Can also utilize lysophosphatidylglycerol (LPG) as substrate in vitro. Has neither activity towards lysophosphatidic acid (LPA) nor lysophosphatidylinositol (LPI). Lysophospholipid acyltransferases catalyze the reacylation step of the phospholipid remodeling pathway also known as the Lands cycle. The primary function of the Lands cycle is to provide a route for acyl remodeling to modify fatty acid (FA) composition of phospholipids derived from the Kennedy pathway. Is involved in PC acyl editing and phosphocholine headgroup exchange between PC and diacylglycerols. This processes control the majority of acyl fluxes through PC to provide polyunsaturated fatty acids for triacylglycerols synthesis in seeds. Involved with LPCAT2 in the direct incorporation of newly synthesized fatty acids exported form the chloroplast into PC through acyl editing. This is Lysophospholipid acyltransferase 1 from Arabidopsis thaliana (Mouse-ear cress).